The sequence spans 433 residues: 26S proteasome regulatory subunit 7 (433 aa).

The interval 1–22 (MPDYLGADQRKTKEDEKDDKPI) is disordered. Over residues 8–22 (DQRKTKEDEKDDKPI) the composition is skewed to basic and acidic residues. An N6-acetyllysine modification is found at Lys116. An ATP-binding site is contributed by 216–223 (GPPGTGKT). Lys422 is subject to N6-acetyllysine.

It belongs to the AAA ATPase family. As to quaternary structure, component of the 19S proteasome regulatory particle complex. The 26S proteasome consists of a 20S core particle (CP) and two 19S regulatory subunits (RP). The regulatory particle is made of a lid composed of 9 subunits, a base containing 6 ATPases including PSMC2 and few additional components. Interacts with NDC80/HEC; this interaction is detected only during M phase. Interacts and SQSTM1. Interacts with PAAF1. Directly interacts with TRIM5. Monoubiquitinated by RNF181. Post-translationally, phosphorylated. Dephosphorylated by UBLCP1 which impairs PSMC2 ATPase activity and disrupts 26S proteasome assembly.

Its subcellular location is the cytoplasm. It localises to the nucleus. In terms of biological role, component of the 26S proteasome, a multiprotein complex involved in the ATP-dependent degradation of ubiquitinated proteins. This complex plays a key role in the maintenance of protein homeostasis by removing misfolded or damaged proteins, which could impair cellular functions, and by removing proteins whose functions are no longer required. Therefore, the proteasome participates in numerous cellular processes, including cell cycle progression, apoptosis, or DNA damage repair. PSMC2 belongs to the heterohexameric ring of AAA (ATPases associated with diverse cellular activities) proteins that unfolds ubiquitinated target proteins that are concurrently translocated into a proteolytic chamber and degraded into peptides. The polypeptide is 26S proteasome regulatory subunit 7 (PSMC2) (Bos taurus (Bovine)).